The following is a 129-amino-acid chain: Glycine cleavage system H protein (129 aa).

One can recognise a Lipoyl-binding domain in the interval 23–104 (TVTVGITQHA…SYSAWLFKLK (82 aa)). K64 carries the post-translational modification N6-lipoyllysine.

The protein belongs to the GcvH family. In terms of assembly, the glycine cleavage system is composed of four proteins: P, T, L and H. It depends on (R)-lipoate as a cofactor.

Functionally, the glycine cleavage system catalyzes the degradation of glycine. The H protein shuttles the methylamine group of glycine from the P protein to the T protein. In Nitrosomonas eutropha (strain DSM 101675 / C91 / Nm57), this protein is Glycine cleavage system H protein.